We begin with the raw amino-acid sequence, 800 residues long: uncharacterized protein (800 aa).

A signal peptide spans 1–21; the sequence is MNRFFISTLLLLAQHLAPAAA. Residues 63–72 show a composition bias toward polar residues; the sequence is SLSTGSPVEI. Disordered stretches follow at residues 63 to 470, 602 to 670, and 710 to 776; these read SLST…PLTT, TPIT…SSTS, and SSLS…TPSS. 4 stretches are compositionally biased toward low complexity: residues 73–314, 321–368, 375–444, and 451–470; these read TSTS…SSTS, STSS…SSTS, STSS…TSTP, and TTST…PLTT. Over residues 710–720 the composition is skewed to low complexity; the sequence is SSLSSIPNNST. Residues 721–734 are compositionally biased toward polar residues; it reads EVKTASTSSGTEIK. Residues 735–776 show a composition bias toward low complexity; it reads TASTSSGSSSSSSYTPASSTSTTTSSVSSRQSSSSSSFTPSS.

The protein resides in the secreted. It localises to the cell surface. This is an uncharacterized protein from Schizosaccharomyces pombe (strain 972 / ATCC 24843) (Fission yeast).